Here is a 128-residue protein sequence, read N- to C-terminus: Ribosome-binding factor A (128 aa).

Belongs to the RbfA family. Monomer. Binds 30S ribosomal subunits, but not 50S ribosomal subunits or 70S ribosomes.

The protein resides in the cytoplasm. Its function is as follows. One of several proteins that assist in the late maturation steps of the functional core of the 30S ribosomal subunit. Associates with free 30S ribosomal subunits (but not with 30S subunits that are part of 70S ribosomes or polysomes). Required for efficient processing of 16S rRNA. May interact with the 5'-terminal helix region of 16S rRNA. The polypeptide is Ribosome-binding factor A (Idiomarina loihiensis (strain ATCC BAA-735 / DSM 15497 / L2-TR)).